Reading from the N-terminus, the 61-residue chain is Type IV secretion system protein PtlI homolog (61 aa).

A signal peptide spans 1–25 (MIHAHSNARLLRWAILAIAPATLGA). A disordered region spans residues 29–61 (NGPPGLPYPDGKPLIPINTAAPEQGSSCQTRAP). The span at 52-61 (QGSSCQTRAP) shows a compositional bias: polar residues.

The chain is Type IV secretion system protein PtlI homolog (ptlI) from Bordetella bronchiseptica (strain ATCC BAA-588 / NCTC 13252 / RB50) (Alcaligenes bronchisepticus).